The primary structure comprises 130 residues: Zinc finger A20 and AN1 domain-containing stress-associated protein 10 (130 aa).

The A20-type zinc-finger motif lies at 4–38 (ETEALPCEGGCGLYGTRVNNNLCSLCYKKSVLQHS). 12 residues coordinate Zn(2+): Cys-10, Cys-14, Cys-26, Cys-29, Cys-71, Cys-74, Cys-85, Cys-87, Cys-92, His-95, His-101, and Cys-103. Residues 65–111 (PVKKRRCGICKRKVGMLGFKCRCGHMFCGSHRYPEEHSCPFDYKQSG) form an AN1-type zinc finger.

In terms of biological role, may be involved in environmental stress response. This chain is Zinc finger A20 and AN1 domain-containing stress-associated protein 10 (SAP10), found in Arabidopsis thaliana (Mouse-ear cress).